Reading from the N-terminus, the 245-residue chain is 1-(5-phosphoribosyl)-5-[(5-phosphoribosylamino)methylideneamino] imidazole-4-carboxamide isomerase (245 aa).

Residue D8 is the Proton acceptor of the active site. D130 acts as the Proton donor in catalysis.

This sequence belongs to the HisA/HisF family.

It is found in the cytoplasm. The catalysed reaction is 1-(5-phospho-beta-D-ribosyl)-5-[(5-phospho-beta-D-ribosylamino)methylideneamino]imidazole-4-carboxamide = 5-[(5-phospho-1-deoxy-D-ribulos-1-ylimino)methylamino]-1-(5-phospho-beta-D-ribosyl)imidazole-4-carboxamide. It participates in amino-acid biosynthesis; L-histidine biosynthesis; L-histidine from 5-phospho-alpha-D-ribose 1-diphosphate: step 4/9. The chain is 1-(5-phosphoribosyl)-5-[(5-phosphoribosylamino)methylideneamino] imidazole-4-carboxamide isomerase from Marinobacter nauticus (strain ATCC 700491 / DSM 11845 / VT8) (Marinobacter aquaeolei).